The primary structure comprises 62 residues: Sperm protamine P1 (62 aa).

Positions 1-62 (MARYRHSRSR…RYSRRRRRRY (62 aa)) are disordered.

Belongs to the protamine P1 family. As to expression, testis.

It localises to the nucleus. The protein localises to the chromosome. In terms of biological role, protamines substitute for histones in the chromatin of sperm during the haploid phase of spermatogenesis. They compact sperm DNA into a highly condensed, stable and inactive complex. The sequence is that of Sperm protamine P1 (PRM1) from Dendrolagus dorianus (Doria's tree-kangaroo).